The primary structure comprises 600 residues: Aspartate--tRNA(Asp/Asn) ligase (600 aa).

Residue Glu-187 coordinates L-aspartate. The aspartate stretch occupies residues 211-214; the sequence is QIFK. Positions 233 and 463 each coordinate L-aspartate. An ATP-binding site is contributed by 233-235; it reads RDE. Glu-497 is an ATP binding site. An L-aspartate-binding site is contributed by Arg-504. ATP is bound at residue 549-552; sequence GVDR.

Belongs to the class-II aminoacyl-tRNA synthetase family. Type 1 subfamily. Homodimer.

The protein resides in the cytoplasm. The catalysed reaction is tRNA(Asx) + L-aspartate + ATP = L-aspartyl-tRNA(Asx) + AMP + diphosphate. In terms of biological role, aspartyl-tRNA synthetase with relaxed tRNA specificity since it is able to aspartylate not only its cognate tRNA(Asp) but also tRNA(Asn). Reaction proceeds in two steps: L-aspartate is first activated by ATP to form Asp-AMP and then transferred to the acceptor end of tRNA(Asp/Asn). This chain is Aspartate--tRNA(Asp/Asn) ligase, found in Wolbachia pipientis subsp. Culex pipiens (strain wPip).